The following is a 287-amino-acid chain: Hydroxysteroid 11-beta-dehydrogenase 1-like protein (287 aa).

The N-terminal stretch at 1 to 22 (MKLYAKLLLCSICVAFIAVRWS) is a signal peptide. NADP(+)-binding positions include 40–66 (GAST…TARR), 91–92 (DM), and 118–120 (NHI). Ser169 is a substrate binding site. Tyr182 acts as the Proton acceptor in catalysis. NADP(+) contacts are provided by residues 182 to 186 (YASTK) and 215 to 221 (GLIDTDS).

The protein belongs to the short-chain dehydrogenases/reductases (SDR) family.

It localises to the secreted. It catalyses the reaction cortisone + NADPH + H(+) = cortisol + NADP(+). Unidirectional NADP(+)-dependent cortisol dehydrogenase (in vitro). This chain is Hydroxysteroid 11-beta-dehydrogenase 1-like protein (hsd11b1l), found in Danio rerio (Zebrafish).